Here is a 542-residue protein sequence, read N- to C-terminus: CTP synthase (542 aa).

The tract at residues 1 to 265 is amidoligase domain; it reads MTRYIFVTGG…DDFVVERFGL (265 aa). Ser13 is a CTP binding site. Ser13 serves as a coordination point for UTP. ATP-binding positions include 14–19 and Asp71; that span reads SLGKGI. Mg(2+) is bound by residues Asp71 and Glu139. CTP-binding positions include 146 to 148, 186 to 191, and Lys222; these read DIE and KTKPTQ. Residues 186 to 191 and Lys222 each bind UTP; that span reads KTKPTQ. In terms of domain architecture, Glutamine amidotransferase type-1 spans 290–541; sequence TIAMVGKYME…VKAALAQKNK (252 aa). Gly351 is a binding site for L-glutamine. Cys378 acts as the Nucleophile; for glutamine hydrolysis in catalysis. L-glutamine contacts are provided by residues 379-382, Glu402, and Arg469; that span reads LGMQ. Residues His514 and Glu516 contribute to the active site.

It belongs to the CTP synthase family. Homotetramer.

It catalyses the reaction UTP + L-glutamine + ATP + H2O = CTP + L-glutamate + ADP + phosphate + 2 H(+). It carries out the reaction L-glutamine + H2O = L-glutamate + NH4(+). The enzyme catalyses UTP + NH4(+) + ATP = CTP + ADP + phosphate + 2 H(+). Its pathway is pyrimidine metabolism; CTP biosynthesis via de novo pathway; CTP from UDP: step 2/2. With respect to regulation, allosterically activated by GTP, when glutamine is the substrate; GTP has no effect on the reaction when ammonia is the substrate. The allosteric effector GTP functions by stabilizing the protein conformation that binds the tetrahedral intermediate(s) formed during glutamine hydrolysis. Inhibited by the product CTP, via allosteric rather than competitive inhibition. Catalyzes the ATP-dependent amination of UTP to CTP with either L-glutamine or ammonia as the source of nitrogen. Regulates intracellular CTP levels through interactions with the four ribonucleotide triphosphates. This Pseudomonas putida (strain ATCC 700007 / DSM 6899 / JCM 31910 / BCRC 17059 / LMG 24140 / F1) protein is CTP synthase.